We begin with the raw amino-acid sequence, 372 residues long: Saccharopine dehydrogenase [NAD(+), L-lysine-forming] (372 aa).

Residues Arg-17 and Lys-76 each contribute to the L-saccharopine site. Lys-76 (proton acceptor) is an active-site residue. Residue His-95 is the Proton donor of the active site. Gln-100 is an L-saccharopine binding site. Arg-129 provides a ligand contact to NAD(+). Residues Arg-130 and Phe-134 each coordinate L-saccharopine. Residues 202-203, Asp-226, Thr-230, Tyr-250, and Val-277 each bind NAD(+); that span reads GR. Cysteines 204 and 248 form a disulfide. 278 to 280 lines the L-saccharopine pocket; the sequence is SAD. Residue 317–320 participates in NAD(+) binding; that stretch reads IDHL. Residues 370 to 372 carry the Microbody targeting signal motif; that stretch reads SKL.

Belongs to the AlaDH/PNT family. Monomer.

It is found in the peroxisome. It carries out the reaction L-saccharopine + NAD(+) + H2O = L-lysine + 2-oxoglutarate + NADH + H(+). Its pathway is amino-acid biosynthesis; L-lysine biosynthesis via AAA pathway; L-lysine from L-alpha-aminoadipate (fungal route): step 3/3. In terms of biological role, catalyzes the NAD(+)-dependent cleavage of saccharopine to L-lysine and 2-oxoglutarate, the final step in the alpha-aminoadipate (AAA) pathway for lysin biosynthesis. In Candida glabrata (strain ATCC 2001 / BCRC 20586 / JCM 3761 / NBRC 0622 / NRRL Y-65 / CBS 138) (Yeast), this protein is Saccharopine dehydrogenase [NAD(+), L-lysine-forming] (LYS1).